The sequence spans 85 residues: RNA-binding protein Hfq (85 aa).

A Sm domain is found at 9 to 68; the sequence is DPFLNELRKEKVPVSVFLVNGIKLHGIIDSFDQYVVMLKNSITQMVYKHAISTVVPSRMV.

Belongs to the Hfq family. As to quaternary structure, homohexamer.

In terms of biological role, RNA chaperone that binds small regulatory RNA (sRNAs) and mRNAs to facilitate mRNA translational regulation in response to envelope stress, environmental stress and changes in metabolite concentrations. Also binds with high specificity to tRNAs. This chain is RNA-binding protein Hfq, found in Legionella pneumophila (strain Paris).